The following is a 549-amino-acid chain: Hydroxylamine reductase (549 aa).

[4Fe-4S] cluster-binding residues include Cys-3, Cys-6, Cys-15, and Cys-21. Hybrid [4Fe-2O-2S] cluster-binding residues include His-248, Glu-272, Cys-316, Cys-403, Cys-431, Cys-456, Glu-490, and Lys-492. Cys-403 carries the cysteine persulfide modification.

This sequence belongs to the HCP family. The cofactor is [4Fe-4S] cluster. Hybrid [4Fe-2O-2S] cluster is required as a cofactor.

The protein localises to the cytoplasm. The catalysed reaction is A + NH4(+) + H2O = hydroxylamine + AH2 + H(+). Its function is as follows. Catalyzes the reduction of hydroxylamine to form NH(3) and H(2)O. The sequence is that of Hydroxylamine reductase from Rhodospirillum rubrum (strain ATCC 11170 / ATH 1.1.1 / DSM 467 / LMG 4362 / NCIMB 8255 / S1).